The primary structure comprises 183 residues: Apo-citrate lyase phosphoribosyl-dephospho-CoA transferase (183 aa).

Belongs to the CitX family.

The enzyme catalyses apo-[citrate lyase ACP] + 2'-(5''-triphospho-alpha-D-ribosyl)-3'-dephospho-CoA = holo-[citrate lyase ACP] + diphosphate. In terms of biological role, transfers 2-(5''-triphosphoribosyl)-3'-dephosphocoenzyme-A on a serine residue to the apo-acyl carrier protein (gamma chain) of the citrate lyase to yield holo-acyl carrier protein. This is Apo-citrate lyase phosphoribosyl-dephospho-CoA transferase from Escherichia coli (strain SMS-3-5 / SECEC).